The sequence spans 363 residues: 1,2-Dihydrovomilenine reductase (363 aa).

The 329-residue stretch at 24-352 folds into the Enoyl reductase (ER) domain; sequence GILSPFKFSR…KGDVRYRFVI (329 aa). Cysteine 51 provides a ligand contact to Zn(2+). Serine 53 is a binding site for NADP(+). Residues aspartate 54, glutamate 74, cysteine 104, cysteine 107, cysteine 110, and cysteine 118 each contribute to the Zn(2+) site. Residues leucine 193, glycine 195, leucine 196, serine 215, threonine 216, serine 217, lysine 220, lysine 221, valine 278, alanine 280, threonine 302, and arginine 349 each contribute to the NADP(+) site.

This sequence belongs to the zinc-containing alcohol dehydrogenase family. Class-P subfamily. Homodimer. Zn(2+) serves as cofactor. In terms of tissue distribution, mainly expressed in mature roots and, to a lower extent, in stems and leaves.

It localises to the cytoplasm. It catalyses the reaction 17-O-acetylnorajmaline + NADP(+) = (2R)-1,2-dihydrovomilenine + NADPH + 2 H(+). The enzyme catalyses (20S)-19,20-dihydrovomilenine + NADP(+) = vomilenine + NADPH + H(+). It functions in the pathway alkaloid biosynthesis; ajmaline biosynthesis. In terms of biological role, alcohol dehydrogenase involved in the biosynthesis of ajmaline-type monoterpenoid indole alkaloids (MIAs) natural products, important plant-derived pharmaceuticals used in the therapy of heart disorders. Catalyzes the conversion of 1,2-dihydrovomilenine to 17-O-acetylnorajmaline, an intermediate chemical in the biosynthesis of ajmaline. Also able, with a lower efficiency, to convert vomilenine into 19,20-dihydrovomilenine. The polypeptide is 1,2-Dihydrovomilenine reductase (Rauvolfia serpentina (Serpentine wood)).